We begin with the raw amino-acid sequence, 305 residues long: MLKNKSVVSIDDVQNDDLFEIFDLSESMLKTIESKGNAPLLTNKIMATLFYEPSTRTRLSFESAMHRLGGSVITVSDTKTSSAAKGETLADTVRMASSYSDIIVIRHPLEGAARLASRFTSKPIINAGDGSGQHPTQTILDLFTIKKELGSIDGKVITMVGDLRYGRTIHSLIIALSRFDVKVNLVSPEILRLPEYVYSMLPDRNYVKEYNDLEEVIGETDVLYVTRIQKERFSDQNEYQSVIGSYSINSETVEKMKKKSVIMHPLPRVDEISPDVDNMPQAAYFRQAYYGVPVRMALIYKILGD.

2 residues coordinate carbamoyl phosphate: arginine 56 and threonine 57. Lysine 85 lines the L-aspartate pocket. The carbamoyl phosphate site is built by arginine 106, histidine 134, and glutamine 137. L-aspartate is bound by residues arginine 167 and arginine 227. The carbamoyl phosphate site is built by leucine 266 and proline 267.

Belongs to the aspartate/ornithine carbamoyltransferase superfamily. ATCase family. As to quaternary structure, heterooligomer of catalytic and regulatory chains.

It catalyses the reaction carbamoyl phosphate + L-aspartate = N-carbamoyl-L-aspartate + phosphate + H(+). It functions in the pathway pyrimidine metabolism; UMP biosynthesis via de novo pathway; (S)-dihydroorotate from bicarbonate: step 2/3. Functionally, catalyzes the condensation of carbamoyl phosphate and aspartate to form carbamoyl aspartate and inorganic phosphate, the committed step in the de novo pyrimidine nucleotide biosynthesis pathway. In Thermoplasma volcanium (strain ATCC 51530 / DSM 4299 / JCM 9571 / NBRC 15438 / GSS1), this protein is Aspartate carbamoyltransferase catalytic subunit.